Reading from the N-terminus, the 40-residue chain is Photosystem II reaction center protein J (40 aa).

The helical transmembrane segment at 8 to 28 (IPLWVIGTVAGILVIGIIGIF) threads the bilayer.

Belongs to the PsbJ family. PSII is composed of 1 copy each of membrane proteins PsbA, PsbB, PsbC, PsbD, PsbE, PsbF, PsbH, PsbI, PsbJ, PsbK, PsbL, PsbM, PsbT, PsbX, PsbY, PsbZ, Psb30/Ycf12, at least 3 peripheral proteins of the oxygen-evolving complex and a large number of cofactors. It forms dimeric complexes.

It localises to the plastid. The protein localises to the chloroplast thylakoid membrane. Functionally, one of the components of the core complex of photosystem II (PSII). PSII is a light-driven water:plastoquinone oxidoreductase that uses light energy to abstract electrons from H(2)O, generating O(2) and a proton gradient subsequently used for ATP formation. It consists of a core antenna complex that captures photons, and an electron transfer chain that converts photonic excitation into a charge separation. This is Photosystem II reaction center protein J from Lobularia maritima (Sweet alyssum).